The following is a 218-amino-acid chain: Protein-L-isoaspartate O-methyltransferase (218 aa).

The active site involves Ser60.

Belongs to the methyltransferase superfamily. L-isoaspartyl/D-aspartyl protein methyltransferase family.

It is found in the cytoplasm. It carries out the reaction [protein]-L-isoaspartate + S-adenosyl-L-methionine = [protein]-L-isoaspartate alpha-methyl ester + S-adenosyl-L-homocysteine. Its function is as follows. Catalyzes the methyl esterification of L-isoaspartyl residues in peptides and proteins that result from spontaneous decomposition of normal L-aspartyl and L-asparaginyl residues. It plays a role in the repair and/or degradation of damaged proteins. The sequence is that of Protein-L-isoaspartate O-methyltransferase from Roseiflexus sp. (strain RS-1).